The primary structure comprises 235 residues: Kinetochore protein Spc25 (235 aa).

Positions 44-106 form a coiled coil; sequence KNILSAKEAI…DMEAQLLRHT (63 aa). A disordered region spans residues 193-216; the sequence is EVAGASPVTPSGSERPKATSKHSN.

This sequence belongs to the SPC25 family. In terms of assembly, component of the Ndc80 complex, which is composed of Ndc80, Nuf2 and Spc25.

It is found in the nucleus. The protein localises to the chromosome. Its subcellular location is the centromere. It localises to the kinetochore. Its function is as follows. Acts as a component of the essential kinetochore-associated Ndc80 complex, which is required for chromosome segregation and spindle checkpoint activity during meiosis and mitosis. Required for kinetochore integrity and the organization of stable microtubule binding sites in the outer plate of the kinetochore. Participates in SAC signaling that responds specifically to disruptions in spindle microtubule dynamics. The NDC80 complex synergistically enhances the affinity of the SKA1 complex for microtubules and may allow the NDC80 complex to track depolymerizing microtubules. The sequence is that of Kinetochore protein Spc25 from Drosophila pseudoobscura pseudoobscura (Fruit fly).